The following is a 583-amino-acid chain: Cationic amino acid transporter 6, chloroplastic (583 aa).

The N-terminal 50 residues, 1-50, are a transit peptide targeting the chloroplast; it reads MEVQSSSNNGGHSSFSSLRVYLNSLSATPSRLSRRAISVSTSSDEMSRVR. 14 helical membrane passes run 63–83, 91–111, 132–152, 186–206, 216–236, 255–275, 294–314, 347–367, 397–417, 418–438, 450–470, 481–501, 509–529, and 541–561; these read WYDL…FVTT, AGPS…LSAF, ITFG…DYVM, GFNE…VIIC, NMIM…MGFI, FFPF…LSYI, IPVG…LMAV, VVGI…MLGQ, ASTF…LNVL, LNLV…ALIF, WPTL…TLIW, FMLG…QCVV, LWGV…NIFL, and FGFF…HASS.

The protein belongs to the amino acid-polyamine-organocation (APC) superfamily. Cationic amino acid transporter (CAT) (TC 2.A.3.3) family. Expressed in roots, stems, flowers, and leaves.

Its subcellular location is the plastid. The protein resides in the chloroplast membrane. Its function is as follows. Permease involved in the transport of the cationic neutral or acidic amino acids. The sequence is that of Cationic amino acid transporter 6, chloroplastic (CAT6) from Arabidopsis thaliana (Mouse-ear cress).